Here is a 456-residue protein sequence, read N- to C-terminus: Gamma-aminobutyric acid receptor subunit alpha-1 (456 aa).

Positions 1 to 27 are cleaved as a signal peptide; the sequence is MRKSPGLSDYLWAWILLLSTLTGRSYG. Residues 28-253 are Extracellular-facing; it reads QPSLQDELKD…FHLKRKIGYF (226 aa). N-linked (GlcNAc...) asparagine glycosylation is present at Asn-38. Residue Arg-94 coordinates 4-aminobutanoate. Asn-138 carries N-linked (GlcNAc...) asparagine glycosylation. Thr-157 contacts 4-aminobutanoate. Cys-166 and Cys-180 form a disulfide bridge. The helical transmembrane segment at 254-274 threads the bilayer; it reads VIQTYLPCIMTVILSQVSFWL. Over 275 to 279 the chain is Cytoplasmic; that stretch reads NRESV. Residues 280 to 301 form a helical membrane-spanning segment; sequence PARTVFGVTTVLTMTTLSISAR. At 302–311 the chain is on the extracellular side; the sequence is NSLPKVAYAT. A helical membrane pass occupies residues 312 to 333; that stretch reads AMDWFIAVCYAFVFSALIEFAT. The Cytoplasmic portion of the chain corresponds to 334–421; it reads VNYFTKRGYA…TFNSVSKIDR (88 aa). The chain crosses the membrane as a helical span at residues 422 to 441; that stretch reads LSRIAFPLLFGIFNLVYWAT. Over 442–456 the chain is Extracellular; that stretch reads YLNREPQLKAPTPHQ.

It belongs to the ligand-gated ion channel (TC 1.A.9) family. Gamma-aminobutyric acid receptor (TC 1.A.9.5) subfamily. GABRA1 sub-subfamily. Heteropentamer, formed by a combination of alpha (GABRA1-6), beta (GABRB1-3), gamma (GABRG1-3), delta (GABRD), epsilon (GABRE), rho (GABRR1-3), pi (GABRP) and theta (GABRQ) subunits, each subunit exhibiting distinct physiological and pharmacological properties. Interacts with UBQLN1. Interacts with TRAK1. Interacts with KIF21B. Identified in a complex of 720 kDa composed of LHFPL4, NLGN2, GABRA1, GABRB2, GABRG2 and GABRB3. Interacts with LHFPL4. Interacts with NLGN2. Interacts with SHISA7; interaction leads to the regulation of GABA(A) receptor trafficking, channel deactivation kinetics and pharmacology.

The protein localises to the postsynaptic cell membrane. It localises to the cell membrane. Its subcellular location is the cytoplasmic vesicle membrane. The enzyme catalyses chloride(in) = chloride(out). Allosterically activated by benzodiazepines, the neuroanesthetic alphaxalone and pentobarbital. Inhibited by the antagonist bicuculline. Potentiated by histamine. Functionally, alpha subunit of the heteropentameric ligand-gated chloride channel gated by gamma-aminobutyric acid (GABA), a major inhibitory neurotransmitter in the brain. GABA-gated chloride channels, also named GABA(A) receptors (GABAAR), consist of five subunits arranged around a central pore and contain GABA active binding site(s) located at the alpha and beta subunit interface(s). When activated by GABA, GABAARs selectively allow the flow of chloride anions across the cell membrane down their electrochemical gradient. Alpha-1/GABRA1-containing GABAARs are largely synaptic. Chloride influx into the postsynaptic neuron following GABAAR opening decreases the neuron ability to generate a new action potential, thereby reducing nerve transmission. GABAARs containing alpha-1 and beta-2 or -3 subunits exhibit synaptogenic activity; the gamma-2 subunit being necessary but not sufficient to induce rapid synaptic contacts formation. GABAARs function also as histamine receptor where histamine binds at the interface of two neighboring beta subunits and potentiates GABA response. GABAARs containing alpha, beta and epsilon subunits also permit spontaneous chloride channel activity while preserving the structural information required for GABA-gated openings. Alpha-1-mediated plasticity in the orbitofrontal cortex regulates context-dependent action selection. Together with rho subunits, may also control neuronal and glial GABAergic transmission in the cerebellum. This chain is Gamma-aminobutyric acid receptor subunit alpha-1 (GABRA1), found in Macaca fascicularis (Crab-eating macaque).